The following is a 421-amino-acid chain: MSKTHLTEQKFSDFALHPVVVQALEKKGFYNCTPIQALALPLTLAGRDVAGQAQTGTGKTMAFLTSTFHYLLSHPAAENRQVNQPRALIMAPTRELAVQIHSDAEPLAEATGIKLGLAYGGDGYDKQLKVLESGVDILIGTTGRLIDYTKQNHVNLGAIQVVVLDEADRMYDLGFIKDIRWLFRRMPAATERLNMLFSATLSYRVRELAFEQMNNAEYVEVEPEQKTGHRIKEELFYPSNEEKMRLLQTLIEEEWPDRAIIFANTKHRCEDIWGHLAADGHRVGLLTGDVAQKKRLRILDEFTRGDLDILVATDVAARGLHIPAVTHVFNYDLPDDCEDYVHRIGRTGRAGASGHSISLACEEYALNLPAIETYIGHSIPVSKYNPDALLSELPPPKRLSRPRTGNGPRRSGAPRNRRRTG.

The Q motif signature appears at 9-37; the sequence is QKFSDFALHPVVVQALEKKGFYNCTPIQA. The Helicase ATP-binding domain maps to 40–219; the sequence is LPLTLAGRDV…FEQMNNAEYV (180 aa). 53 to 60 provides a ligand contact to ATP; that stretch reads AQTGTGKT. The DEAD box signature appears at 165–168; that stretch reads DEAD. Positions 245–390 constitute a Helicase C-terminal domain; sequence RLLQTLIEEE…VSKYNPDALL (146 aa). Positions 390–421 are disordered; the sequence is LSELPPPKRLSRPRTGNGPRRSGAPRNRRRTG. Over residues 405 to 414 the composition is skewed to low complexity; it reads GNGPRRSGAP.

It belongs to the DEAD box helicase family. RhlB subfamily. As to quaternary structure, component of the RNA degradosome, which is a multiprotein complex involved in RNA processing and mRNA degradation.

The protein localises to the cytoplasm. The enzyme catalyses ATP + H2O = ADP + phosphate + H(+). In terms of biological role, DEAD-box RNA helicase involved in RNA degradation. Has RNA-dependent ATPase activity and unwinds double-stranded RNA. The polypeptide is ATP-dependent RNA helicase RhlB (Cronobacter sakazakii (strain ATCC BAA-894) (Enterobacter sakazakii)).